The primary structure comprises 105 residues: uncharacterized protein (105 aa).

The helical transmembrane segment at 29-49 (NAFLLILSEAYLLFVFLSYLI) threads the bilayer.

It is found in the membrane. This is an uncharacterized protein from Saccharomyces cerevisiae (strain ATCC 204508 / S288c) (Baker's yeast).